The chain runs to 595 residues: uncharacterized protein (595 aa).

A disordered region spans residues 112–180 (VRPPGYDPES…KDVFGRALPT (69 aa)). Composition is skewed to basic and acidic residues over residues 120 to 133 (ESAKAAEYKDEKHK) and 161 to 174 (RTQERKKPRPKDVF). A CCHC-type; degenerate zinc finger spans residues 211-228 (VKCLRCGNFGHQSGDRDC). Disordered regions lie at residues 254–290 (HTDPSEPLKWELKQKPGLSPPRGGFDPDDPNQQIVAE) and 310–595 (KSMS…RRRN). The segment covering 256-267 (DPSEPLKWELKQ) has biased composition (basic and acidic residues). Basic residues-rich tracts occupy residues 316-331 (KKRKSKKNKRHKKHSS) and 351-364 (RGSKKRKKLKKKSK). Basic and acidic residues-rich tracts occupy residues 414–428 (HYYDEKHQKRKEIVD), 470–539 (VSEK…HVYE), and 547–565 (FSDRYRSTKKTESDSESNR). The segment covering 584–595 (RKHRYSTNRRRN) has biased composition (basic residues).

This is an uncharacterized protein from Arabidopsis thaliana (Mouse-ear cress).